A 402-amino-acid polypeptide reads, in one-letter code: D-mannonate dehydratase (402 aa).

Substrate contacts are provided by N37 and H122. Y159 (proton donor/acceptor) is an active-site residue. D210 contributes to the Mg(2+) binding site. The active-site Proton donor/acceptor is the H212. 2 residues coordinate Mg(2+): E236 and E262. 5 residues coordinate substrate: E262, R283, H312, D316, and E339.

The protein belongs to the mandelate racemase/muconate lactonizing enzyme family. GalD subfamily. The cofactor is Mg(2+).

It catalyses the reaction D-mannonate = 2-dehydro-3-deoxy-D-gluconate + H2O. Its pathway is carbohydrate metabolism; pentose and glucuronate interconversion. Its function is as follows. Catalyzes the dehydration of D-mannonate. Has no detectable activity with a panel of 70 other acid sugars (in vitro). The sequence is that of D-mannonate dehydratase from Rhizorhabdus wittichii (strain DSM 6014 / CCUG 31198 / JCM 15750 / NBRC 105917 / EY 4224 / RW1) (Sphingomonas wittichii).